The primary structure comprises 152 residues: Interleukin-3 (152 aa).

The N-terminal stretch at 1–19 is a signal peptide; that stretch reads MSRLPVLLLLQLLVRPGLQ. N34 and N89 each carry an N-linked (GlcNAc...) asparagine glycan. C35 and C103 are oxidised to a cystine.

This sequence belongs to the IL-3 family. Interacts with IL3RA. Activated T-cells, mast cells, natural killer cells.

It localises to the secreted. Functionally, cytokine secreted predominantly by activated T-lymphocytes as well as mast cells and osteoblastic cells that controls the production and differentiation of hematopoietic progenitor cells into lineage-restricted cells. Also stimulates mature basophils, eosinophils, and monocytes to become functionally activated. In addition, plays an important role in neural cell proliferation and survival. Participates as well in bone homeostasis and inhibits osteoclast differentiation by preventing NF-kappa-B nuclear translocation and activation. Mechanistically, exerts its biological effects through a receptor composed of IL3RA subunit and a signal transducing subunit IL3RB. Receptor stimulation results in the rapid activation of JAK2 kinase activity leading to STAT5-mediated transcriptional program. Alternatively, contributes to cell survival under oxidative stress in non-hematopoietic systems by activating pathways mediated by PI3K/AKT and ERK. In Homo sapiens (Human), this protein is Interleukin-3.